Consider the following 298-residue polypeptide: Enoyl-CoA hydratase AKT6-1 (298 aa).

The disordered stretch occupies residues 1–23 (MTFSTTKSVAMSPDDDAPSFDIN).

It belongs to the enoyl-CoA hydratase/isomerase family.

The protein operates within mycotoxin biosynthesis. Functionally, enoyl-CoA hydratase; part of the gene clusters that mediate the biosynthesis of the host-selective toxins (HSTs) AK-toxins responsible for Japanese pear black spot disease by the Japanese pear pathotype. AK-toxins are esters of 9,10-epoxy 8-hydroxy 9-methyldecatrienoic acid (EDA). On cellular level, AK-toxins affect plasma membrane of susceptible cells and cause a sudden increase in loss of K(+) after a few minutes of toxin treatment. The acyl-CoA ligase AKT1, the hydrolase AKT2 and enoyl-CoA hydratase AKT3 are all involved in the biosynthesis of the AK-, AF- and ACT-toxin common 9,10-epoxy-8-hydroxy-9-methyl-decatrienoic acid (EDA) structural moiety. Part of the EDA biosynthesis occurs in the peroxisome since these 3 enzymes are localized in peroxisomes. The exact roles of the 3 enzymes, as well as of additional AK-toxin clusters enzymes, including AKT4, AKT6 and AKTS1, have still to be elucidated. The Cytochrome P450 monooxygenase AKT7 on the other side functions to limit production of EDA and AK-toxin, probably via the catalysis of a side reaction of EDA or its precursor. The sequence is that of Enoyl-CoA hydratase AKT6-1 from Alternaria alternata (Alternaria rot fungus).